We begin with the raw amino-acid sequence, 805 residues long: Polyribonucleotide nucleotidyltransferase (805 aa).

Residues Asp491 and Asp497 each coordinate Mg(2+). A KH domain is found at 558–617 (PRMESMIIDKNKIKNVIGTGGKNVREICEKTGVKIEISQDGTVMIYAVSRDAVEEAKNMI). The S1 motif domain occupies 627–694 (GKVFSGVISE…DKDHVQLSMR (68 aa)). The disordered stretch occupies residues 702-805 (DLLEHESYSS…GGGNKKPRFF (104 aa)). The span at 709-721 (YSSSKKNGPQSGD) shows a compositional bias: polar residues.

Belongs to the polyribonucleotide nucleotidyltransferase family. The cofactor is Mg(2+).

The protein localises to the cytoplasm. The enzyme catalyses RNA(n+1) + phosphate = RNA(n) + a ribonucleoside 5'-diphosphate. Functionally, involved in mRNA degradation. Catalyzes the phosphorolysis of single-stranded polyribonucleotides processively in the 3'- to 5'-direction. The chain is Polyribonucleotide nucleotidyltransferase from Anaplasma marginale (strain St. Maries).